A 143-amino-acid polypeptide reads, in one-letter code: MKVYLAAPMRGDRSALANVKKLLQALEERGYVVLTKHVADDVLDVEKGMTPREVFERDIRLLEEADVLVAEVSYPSLGVGFEIAYFLLRGKPVIALALRERLESVSAMIRGITWENFRLVAYSDVDEAIEKLDSMLPGSVDMQ.

Substrate contacts are provided by residues histidine 37, glutamate 82, and 106–108 (SAM).

It belongs to the 2'-deoxynucleoside 5'-phosphate N-hydrolase 1 family. Monomer and homodimer.

The catalysed reaction is a pyrimidine 2'-deoxyribonucleoside 5'-phosphate + H2O = a pyrimidine nucleobase + 2-deoxy-D-ribose 5-phosphate. It carries out the reaction a purine 2'-deoxyribonucleoside 5'-phosphate + H2O = a purine nucleobase + 2-deoxy-D-ribose 5-phosphate. Its function is as follows. Catalyzes the cleavage of the N-glycosidic bond of deoxyribonucleoside 5'-monophosphates to yield deoxyribose 5-phosphate and a purine or pyrimidine base. The chain is Putative 2'-deoxynucleoside 5'-phosphate N-hydrolase 1 from Thermofilum pendens (strain DSM 2475 / Hrk 5).